A 431-amino-acid chain; its full sequence is MANVVVVGAQWGDEGKGKIVDWLSERADVIARFQGGHNAGHTLVIDGKVYKLNALPSGVVRGGKLSVIGNGVVLDPWHLIKEIDIIRGQGVDISPETLMIAENTPLILPIHGELDRAREEAASKGTKIGTTGRGIGPAYEDKVGRRSVRVADLADTATLEARVDRALQHHDPLRKGLGIEPVDRDALVAQLVEIAPHILKYAAPVWKVLNEKRRAGKRILFEGAQGALLDIDFGTYPFVTSSNVIAGQAATGVGVGPGAINYVLGIVKAYTTRVGEGPFPAELDDADGQRLGERGHEFGTVTGRKRRCGWFDAVLVRQTCATSGVNGIALTKLDVLDGFETLKICVGYELDGKRMDYLPTAADHQARCRPIYEEMPGWSDSTEGARSWADLPANAIKYVRRVEELIDCPVALLSTSPEREDTILVTDPFAD.

Residues 12-18 (GDEGKGK) and 40-42 (GHT) contribute to the GTP site. D13 serves as the catalytic Proton acceptor. 2 residues coordinate Mg(2+): D13 and G40. IMP-binding positions include 13 to 16 (DEGK), 38 to 41 (NAGH), T131, R145, Q225, T240, and R304. Residue H41 is the Proton donor of the active site. 300-306 (TVTGRKR) serves as a coordination point for substrate. Residues R306, 332-334 (KLD), and 414-416 (STS) each bind GTP.

Belongs to the adenylosuccinate synthetase family. As to quaternary structure, homodimer. Requires Mg(2+) as cofactor.

The protein localises to the cytoplasm. The enzyme catalyses IMP + L-aspartate + GTP = N(6)-(1,2-dicarboxyethyl)-AMP + GDP + phosphate + 2 H(+). It functions in the pathway purine metabolism; AMP biosynthesis via de novo pathway; AMP from IMP: step 1/2. Plays an important role in the de novo pathway of purine nucleotide biosynthesis. Catalyzes the first committed step in the biosynthesis of AMP from IMP. The chain is Adenylosuccinate synthetase from Roseobacter denitrificans (strain ATCC 33942 / OCh 114) (Erythrobacter sp. (strain OCh 114)).